Consider the following 231-residue polypeptide: MSLHVSYVDKEMTDHARASQPGSAALAQGTQYSLLLKNQSAQPWTFYVYQKMPQPVANVFSLAWFCSPYQIRVGNQIKFTWELAYNFVWSDTGQLIPGVDFFASGVEDCSPSGRNTTTFSLSDGPGLTAPIKGDPAGSLVINDAGNVPNNRFSVGIGMSGTGTYVAQAGTNLLHTFTPTPSYWIAAGTNVTIGSVLSIDTITQTREAKFPSAVFNLVGVLQEDNTWDINPA.

Its function is as follows. May be involved in plant-microbe interaction. The polypeptide is Protein RhiA (rhiA) (Rhizobium leguminosarum bv. viciae).